The sequence spans 222 residues: Kinetochore protein Spc25 (222 aa).

Residues 51–86 (RHQRKVGKLQKVLMERREELDKRVSFIEELDRELEA) adopt a coiled-coil conformation.

It belongs to the SPC25 family. In terms of assembly, component of the Ndc80 complex, which is composed of Ndc80, Nuf2 and Spc25.

The protein localises to the nucleus. It is found in the chromosome. It localises to the centromere. Its subcellular location is the kinetochore. Acts as a component of the essential kinetochore-associated Ndc80 complex, which is required for chromosome segregation and spindle checkpoint activity during meiosis and mitosis. Required for kinetochore integrity and the organization of stable microtubule binding sites in the outer plate of the kinetochore. Participates in SAC signaling that responds specifically to disruptions in spindle microtubule dynamics. The NDC80 complex synergistically enhances the affinity of the SKA1 complex for microtubules and may allow the NDC80 complex to track depolymerizing microtubules. In Drosophila melanogaster (Fruit fly), this protein is Kinetochore protein Spc25.